Here is a 468-residue protein sequence, read N- to C-terminus: Ammonium transporter Amt2 (468 aa).

12 consecutive transmembrane segments (helical) span residues 1 to 21, 39 to 59, 77 to 97, 123 to 143, 156 to 176, 194 to 214, 236 to 256, 268 to 288, 297 to 317, 321 to 341, 350 to 370, and 400 to 420; these read MVGRMCVAVLIVLLLVATAGA, FVWALICGFLVMFMQAGFAML, LMDFAVGSLAFFAVGFALMMG, LWFFMLVFAATAATIVSGSIA, AVVSAVIYPIYGHWLWGGGWL, FAGSGVVHALGGYIALAAVML, LAFAVIGTFILWFGWFGFNAG, IIASNTNLAAAAGAVTAMAIT, VGMTCNGAVAGLVAITAPCAW, WSSVVIGTIAGFIATYGYWWL, VGAIPVHGFSGTWGLIALGIF, and LISAIVNFAWAFGTGFALFWI.

It belongs to the ammonia transporter channel (TC 1.A.11.2) family. Homotrimer.

It localises to the cell membrane. Involved in the uptake of ammonium/ammonia (NH(4)(+)/NH(3)). Transport is electrogenic. The polypeptide is Ammonium transporter Amt2 (Archaeoglobus fulgidus (strain ATCC 49558 / DSM 4304 / JCM 9628 / NBRC 100126 / VC-16)).